The chain runs to 143 residues: Large ribosomal subunit protein uL13 (143 aa).

This sequence belongs to the universal ribosomal protein uL13 family. As to quaternary structure, part of the 50S ribosomal subunit.

Its function is as follows. This protein is one of the early assembly proteins of the 50S ribosomal subunit, although it is not seen to bind rRNA by itself. It is important during the early stages of 50S assembly. The protein is Large ribosomal subunit protein uL13 of Methylacidiphilum infernorum (isolate V4) (Methylokorus infernorum (strain V4)).